The following is a 1439-amino-acid chain: ABC transporter G family member 14 (1439 aa).

The segment covering 1–17 (MEENSNKFEQELKEIGQ) has biased composition (basic and acidic residues). Residues 1 to 21 (MEENSNKFEQELKEIGQDRNQ) are disordered. Residues 117–370 (FSILNFFKPS…FMSLGFDCEP (254 aa)) enclose the ABC transporter 1 domain. The ABC transmembrane type-2 1 domain maps to 475 to 700 (LNDKFGLFTK…GSEFDAYRIC (226 aa)). The next 6 helical transmembrane spans lie at 479–499 (FGLFTKYLSVLIQAFVYSSVF), 516–536 (ILSAVIFNAFLSVGEMSMTFI), 564–584 (IPFTLLQVFLFSIIAYFMFGL), 589–609 (GKFFIFSFTLVGASLACTALF), 614–634 (YLCPSMYIAQNISNVFIIFML), and 734–754 (IIVYCWWIFFVICNMLAMEYI). An ABC transporter 2 domain is found at 805–1049 (FTWQNIRYTV…LTSYFERHGV (245 aa)). 841 to 848 (GSSGAGKT) provides a ligand contact to ATP. The ABC transmembrane type-2 2 domain maps to 1141–1366 (YYTYGSFVQS…YNTCQNYTSA (226 aa)). A run of 6 helical transmembrane segments spans residues 1144–1164 (YGSFVQSALCGLIIGFTFWNL), 1175–1195 (IFFIFEALMLGILLIFVVMPQ), 1217–1237 (FAISIVVVELPFIVISGTIFF), 1256–1276 (FYFWFIFVIFLFFCVSFGQAV), 1283–1303 (MFFAMTLIPLLIVFLFLFSGV), and 1413–1433 (VGIIICFFVFNILMVILFVYL).

This sequence belongs to the ABC transporter superfamily. ABCG family. PDR (TC 3.A.1.205) subfamily.

Its subcellular location is the membrane. The protein is ABC transporter G family member 14 (abcG14) of Dictyostelium discoideum (Social amoeba).